The primary structure comprises 152 residues: Protein-export protein SecB (152 aa).

This sequence belongs to the SecB family. As to quaternary structure, homotetramer, a dimer of dimers. One homotetramer interacts with 1 SecA dimer.

It is found in the cytoplasm. One of the proteins required for the normal export of preproteins out of the cell cytoplasm. It is a molecular chaperone that binds to a subset of precursor proteins, maintaining them in a translocation-competent state. It also specifically binds to its receptor SecA. In Rickettsia conorii (strain ATCC VR-613 / Malish 7), this protein is Protein-export protein SecB.